Consider the following 516-residue polypeptide: Nucleolar complex protein 4 homolog (516 aa).

The next 3 membrane-spanning stretches (helical) occupy residues 296 to 316 (SACDVGGAISLLALNGLFILI), 347 to 367 (FFHLADLFLSSSHLPAYLVAA), and 375 to 395 (LALTAPPEALLMVLPLICNLL).

The protein belongs to the CBF/MAK21 family.

It is found in the nucleus membrane. Its subcellular location is the nucleus. The protein localises to the nucleolus. The chain is Nucleolar complex protein 4 homolog (Noc4l) from Rattus norvegicus (Rat).